A 393-amino-acid chain; its full sequence is Probable protein phosphatase 2C 68 (393 aa).

Residues 56–359 (DFSIAVVQAN…DDITVVVIFI (304 aa)) enclose the PPM-type phosphatase domain. Mn(2+)-binding residues include aspartate 87, glycine 88, aspartate 291, and aspartate 350.

This sequence belongs to the PP2C family. The cofactor is Mg(2+). Requires Mn(2+) as cofactor.

The catalysed reaction is O-phospho-L-seryl-[protein] + H2O = L-seryl-[protein] + phosphate. It catalyses the reaction O-phospho-L-threonyl-[protein] + H2O = L-threonyl-[protein] + phosphate. Functionally, may dephosphorylate and repress plasma membrane H(+)-ATPases (PM H(+)-ATPases, e.g. AHA1 and AHA2), thus influencing negatively plant growth and fitness. The protein is Probable protein phosphatase 2C 68 of Arabidopsis thaliana (Mouse-ear cress).